The following is a 152-amino-acid chain: Probable methionine-R-sulfoxide reductase B (152 aa).

The MsrB domain maps to 27-151 (QTEWKSVLPN…NSVCMAFEKK (125 aa)). Zn(2+) contacts are provided by Cys66, Cys69, Cys116, and Cys119. Cys140 acts as the Nucleophile in catalysis.

Belongs to the MsrB Met sulfoxide reductase family. Requires Zn(2+) as cofactor.

It carries out the reaction L-methionyl-[protein] + [thioredoxin]-disulfide + H2O = L-methionyl-(R)-S-oxide-[protein] + [thioredoxin]-dithiol. Its function is as follows. Methionine-sulfoxide reductase that specifically reduces methionine (R)-sulfoxide back to methionine. While in many cases, methionine oxidation is the result of random oxidation following oxidative stress, methionine oxidation is also a post-translational modification that takes place on specific residue. This is Probable methionine-R-sulfoxide reductase B from Caenorhabditis elegans.